Reading from the N-terminus, the 365-residue chain is Protein-glutamate methylesterase/protein-glutamine glutaminase 2 (365 aa).

The Response regulatory domain maps to Arg18–Asp135. Asp69 is subject to 4-aspartylphosphate. The CheB-type methylesterase domain occupies Gly162–Asp355. Residues Ser174, His200, and Asp297 contribute to the active site.

It belongs to the CheB family. Phosphorylated by CheA. Phosphorylation of the N-terminal regulatory domain activates the methylesterase activity.

It localises to the cytoplasm. The catalysed reaction is [protein]-L-glutamate 5-O-methyl ester + H2O = L-glutamyl-[protein] + methanol + H(+). The enzyme catalyses L-glutaminyl-[protein] + H2O = L-glutamyl-[protein] + NH4(+). Its function is as follows. Involved in chemotaxis. Part of a chemotaxis signal transduction system that modulates chemotaxis in response to various stimuli. Catalyzes the demethylation of specific methylglutamate residues introduced into the chemoreceptors (methyl-accepting chemotaxis proteins or MCP) by CheR. Also mediates the irreversible deamidation of specific glutamine residues to glutamic acid. This Cereibacter sphaeroides (strain ATCC 17023 / DSM 158 / JCM 6121 / CCUG 31486 / LMG 2827 / NBRC 12203 / NCIMB 8253 / ATH 2.4.1.) (Rhodobacter sphaeroides) protein is Protein-glutamate methylesterase/protein-glutamine glutaminase 2.